Reading from the N-terminus, the 328-residue chain is m7GpppN-mRNA hydrolase NUDT17 (328 aa).

A Nudix hydrolase domain is found at 90 to 236; the sequence is GVDLGVAVIL…DGTETPGLLP (147 aa). The short motif at 127-148 is the Nudix box element; that stretch reads GHVELEEELLDGGLRELWEESG. Mg(2+) is bound by residues E142 and E146. The interval 299–328 is disordered; that stretch reads PCKSAAYLDPGPAKEEWNMDPLPPNQGSGK.

This sequence belongs to the Nudix hydrolase family. It depends on Mg(2+) as a cofactor. Requires Mn(2+) as cofactor.

It catalyses the reaction a 5'-end (N(7)-methyl 5'-triphosphoguanosine)-ribonucleoside in mRNA + H2O = N(7)-methyl-GDP + a 5'-end phospho-ribonucleoside in mRNA + 2 H(+). Its function is as follows. Acts as a decapping enzyme capable of hydrolyzing monomethylated capped RNAs (in vitro). Hydrolyzes monomethylated capped RNA after alpha and beta phosphates to form N(7)-methyl-GDP. Shows low activity towards unmethylated capped RNA. This Homo sapiens (Human) protein is m7GpppN-mRNA hydrolase NUDT17 (NUDT17).